Reading from the N-terminus, the 140-residue chain is Nucleoside diphosphate kinase (140 aa).

K11, F59, R87, T93, R104, and N114 together coordinate ATP. H117 acts as the Pros-phosphohistidine intermediate in catalysis.

The protein belongs to the NDK family. As to quaternary structure, homotetramer. Mg(2+) serves as cofactor.

Its subcellular location is the cytoplasm. The catalysed reaction is a 2'-deoxyribonucleoside 5'-diphosphate + ATP = a 2'-deoxyribonucleoside 5'-triphosphate + ADP. It catalyses the reaction a ribonucleoside 5'-diphosphate + ATP = a ribonucleoside 5'-triphosphate + ADP. In terms of biological role, major role in the synthesis of nucleoside triphosphates other than ATP. The ATP gamma phosphate is transferred to the NDP beta phosphate via a ping-pong mechanism, using a phosphorylated active-site intermediate. This Rhodopseudomonas palustris (strain HaA2) protein is Nucleoside diphosphate kinase.